The chain runs to 439 residues: Enolase (439 aa).

Residues His-157 and Glu-166 each contribute to the substrate site. Glu-209 acts as the Proton donor in catalysis. Mg(2+) is bound by residues Asp-244, Glu-297, and Asp-324. The substrate site is built by Glu-297 and Asp-324. Residue Lys-349 is the Proton acceptor of the active site. Substrate is bound by residues 376-379 (SHRS) and Lys-400.

Belongs to the enolase family. As to quaternary structure, homodimer. Requires Mg(2+) as cofactor.

The protein localises to the cytoplasm. It carries out the reaction (2R)-2-phosphoglycerate = phosphoenolpyruvate + H2O. Its pathway is carbohydrate degradation; glycolysis; pyruvate from D-glyceraldehyde 3-phosphate: step 4/5. The sequence is that of Enolase (ENOL) from Mastigamoeba balamuthi (Phreatamoeba balamuthi).